The primary structure comprises 71 residues: Protein Tlp homolog (71 aa).

Positions glutamate 30–isoleucine 56 are disordered. Over residues arginine 39–isoleucine 56 the composition is skewed to basic and acidic residues.

The protein belongs to the Tlp family.

The chain is Protein Tlp homolog from Desulforamulus reducens (strain ATCC BAA-1160 / DSM 100696 / MI-1) (Desulfotomaculum reducens).